A 272-amino-acid chain; its full sequence is MARLAAFDMDGTLLMPDHHLGEKTLSTLARLRERDITLTFATGRHVLEMQHILGALSLDAYLITGNGTRVHSLEGELLHRDDLPADVAELVLYQQWDTRASMHIFNDDGWFTGKEIPALLQAFVYSGFRYQIIDVKKMPLDRVTKICFCGDHDDLTRLQIQLHEALGERAHLCFSATDCLEVLPVGCNKGAALTVLTQHLGLSLRDCMAFGDAMNDREMLGSVGSGFIMGNAMPQLRAELPHLPVIGHCRNQAVSHYLTHWLDNPHLPYSPE.

The Nucleophile role is filled by Asp-8. Mg(2+) is bound by residues Asp-8, Asp-10, and Asp-212.

This sequence belongs to the HAD-like hydrolase superfamily. Cof family. Mg(2+) serves as cofactor.

The catalysed reaction is 4-amino-2-methyl-5-(diphosphooxymethyl)pyrimidine + H2O = 4-amino-2-methyl-5-(phosphooxymethyl)pyrimidine + phosphate + H(+). In terms of biological role, catalyzes the hydrolysis of 4-amino-2-methyl-5-hydroxymethylpyrimidine pyrophosphate (HMP-PP) to 4-amino-2-methyl-5-hydroxymethylpyrimidine phosphate (HMP-P). The polypeptide is HMP-PP phosphatase (Escherichia fergusonii (strain ATCC 35469 / DSM 13698 / CCUG 18766 / IAM 14443 / JCM 21226 / LMG 7866 / NBRC 102419 / NCTC 12128 / CDC 0568-73)).